A 420-amino-acid chain; its full sequence is MIKIPRGTQDILPEDSKKWRYIENQLDELMTFYNYKEIRTPIFESTDLFARGVGDSTDVVQKEMYTFKDKGDRSITLRPEGTAAVVRSYIEHKMQGNPNQPIKLYYNGPMFRYERKQKGRYRQFNQFGVEAIGAENPSVDAEVLAMVMHIYQSFGLKHLKLVINSVGDMASRKEYNEALVKHFEPVIHEFCSDCQSRLHTNPMRILDCKVDRDKEAIKTAPRITDFLNEESKAYYEQVKAYLDDLGIPYIEDPNLVRGLDYYTHTAFELMMDNPNYDGAITTLCGGGRYNGLLELLDGPSETGIGFALSIERLLLALEEEGIELDIEENLDLFIVTMGDQADRYAVKLLNHLRHNGIKADKDYLQRKIKGQMKQADRLGAKFTIVIGDQELENNKIDVKNMTTGESETIELDALVEYFKK.

Belongs to the class-II aminoacyl-tRNA synthetase family. In terms of assembly, homodimer.

The protein localises to the cytoplasm. It carries out the reaction tRNA(His) + L-histidine + ATP = L-histidyl-tRNA(His) + AMP + diphosphate + H(+). This chain is Histidine--tRNA ligase, found in Staphylococcus aureus (strain Mu3 / ATCC 700698).